Reading from the N-terminus, the 688-residue chain is Glycine--tRNA ligase beta subunit (688 aa).

The protein belongs to the class-II aminoacyl-tRNA synthetase family. Tetramer of two alpha and two beta subunits.

It localises to the cytoplasm. It carries out the reaction tRNA(Gly) + glycine + ATP = glycyl-tRNA(Gly) + AMP + diphosphate. The protein is Glycine--tRNA ligase beta subunit of Aliivibrio fischeri (strain ATCC 700601 / ES114) (Vibrio fischeri).